The sequence spans 527 residues: Sensory neuron membrane protein 1 (527 aa).

The Cytoplasmic segment spans residues M1 to G10. The helical transmembrane segment at L11 to I31 threads the bilayer. Over L32–R456 the chain is Extracellular. N67 and N229 each carry an N-linked (GlcNAc...) asparagine glycan. Disulfide bonds link C268-C333, C297-C352, and C335-C341. A glycan (N-linked (GlcNAc...) asparagine) is linked at N440. A helical transmembrane segment spans residues I457–L477. Residues V478 to M527 lie on the Cytoplasmic side of the membrane.

The protein belongs to the CD36 family. Principal component of the olfactory cilia membrane. Localizes to the antennal tissue with two to three fold higher expression in males compared to females.

The protein localises to the cell membrane. Its function is as follows. Plays an olfactory role that is not restricted to pheromone sensitivity. This is Sensory neuron membrane protein 1 from Ostrinia nubilalis (European corn borer).